Reading from the N-terminus, the 913-residue chain is Auxilin (913 aa).

Residue M1 is modified to N-acetylmethionine. 3 tandem repeats follow at residues N36–D39, N40–D43, and T44–D47. Residues N36–D47 are 3 X 4 AA approximate tandem repeats. A Phosphatase tensin-type domain is found at S55–K222. S112 is subject to Phosphoserine. C164 functions as the Phosphocysteine intermediate in the catalytic mechanism. The region spanning F228 to Q366 is the C2 tensin-type domain. Residues P409–P417 carry the SH3-binding motif. The interval Q451–K776 is disordered. Phosphoserine is present on residues S453 and S456. Residues A506 to L523 show a composition bias toward polar residues. The span at A554–T572 shows a compositional bias: low complexity. 2 positions are modified to phosphoserine: S563 and S570. The segment covering F599–V629 has biased composition (polar residues). Residues S654 to H669 show a composition bias toward low complexity. In terms of domain architecture, J spans T849–Y913.

Forms a complex composed of HSPA8, CLTC and DNAJC6. Interacts with HSPA8/HSC70 in an ATP-dependent manner; this interaction stimulates the HSPA8's ATPase activity. Interacts with CLTC; this interaction produces a local change in heavy-chain contacts, creating a detectable global distortion of the clathrin coat. Interacts with AP2A2. Interacts with DNM1(GTP-bound form); this interaction allows clathrin-coated vesicle (CCV) formation at the plasma membrane. In terms of processing, phosphorylation at Ser-570 modulates its ability to bind CLTC and therefore the synaptic vesicle endocytosis (SVE). The N-terminus is blocked. In terms of tissue distribution, expressed in various brain regions, including cerebellum, corpus callosum, cortex, striatum, brainstem, pons, putamen, spinal cord and substantia nigra. Very low expression in non-neural tissues such as leukocytes, liver, adipose tissue, skeletal muscle and bone marrow.

The protein localises to the cytoplasmic vesicle. It is found in the clathrin-coated vesicle. Its function is as follows. May act as a protein phosphatase and/or a lipid phosphatase. Co-chaperone that recruits HSPA8/HSC70 to clathrin-coated vesicles (CCVs) and promotes the ATP-dependent dissociation of clathrin from CCVs and participates in clathrin-mediated endocytosis of synaptic vesicles and their recycling and also in intracellular trafficking. Firstly, binds tightly to the clathrin cages, at a ratio of one DNAJC6 per clathrin triskelion. The HSPA8:ATP complex then binds to the clathrin-auxilin cage, initially at a ratio of one HSPA8 per triskelion leading to ATP hydrolysis stimulation and causing a conformational change in the HSPA8. This cycle is repeated three times to drive to a complex containing the clathrin-auxilin cage associated to three HSPA8:ADP complex. The ATP hydrolysis of the third HSPA8:ATP complex leads to a concerted dismantling of the cage into component triskelia. Then, dissociates from the released triskelia and be recycled to initiate another cycle of HSPA8's recruitment. Also acts during the early steps of clathrin-coated vesicle (CCV) formation through its interaction with the GTP bound form of DNM1. This chain is Auxilin, found in Homo sapiens (Human).